Here is a 762-residue protein sequence, read N- to C-terminus: Cellulose synthase-like protein H2 (762 aa).

Residues 1–15 are compositionally biased toward low complexity; it reads MAVVAAAAATGSTTR. The interval 1–39 is disordered; sequence MAVVAAAAATGSTTRSGGGGGEGTRSGRKKPPPPPLQER. 2 consecutive transmembrane segments (helical) span residues 47-67 and 81-101; these read AWAW…LLAL and GVWR…ALNV. Catalysis depends on residues aspartate 180 and aspartate 470. 6 helical membrane passes run 541-561, 582-602, 619-639, 673-693, 708-728, and 739-759; these read LAYL…CYGL, FSVP…EYMA, IISV…SLGL, LPVF…VTVG, APGI…FPFV, and GIPW…VTFC.

This sequence belongs to the glycosyltransferase 2 family. Plant cellulose synthase-like H subfamily.

It is found in the golgi apparatus membrane. In terms of biological role, thought to be a Golgi-localized beta-glycan synthase that polymerize the backbones of noncellulosic polysaccharides (hemicelluloses) of plant cell wall. The chain is Cellulose synthase-like protein H2 (CSLH2) from Oryza sativa subsp. japonica (Rice).